Here is a 436-residue protein sequence, read N- to C-terminus: Tol-Pal system protein TolB (436 aa).

An N-terminal signal peptide occupies residues 1–19 (MVKCSLIRALMVVAGLVGA).

It belongs to the TolB family. As to quaternary structure, the Tol-Pal system is composed of five core proteins: the inner membrane proteins TolA, TolQ and TolR, the periplasmic protein TolB and the outer membrane protein Pal. They form a network linking the inner and outer membranes and the peptidoglycan layer.

Its subcellular location is the periplasm. In terms of biological role, part of the Tol-Pal system, which plays a role in outer membrane invagination during cell division and is important for maintaining outer membrane integrity. This chain is Tol-Pal system protein TolB, found in Rhizobium etli (strain ATCC 51251 / DSM 11541 / JCM 21823 / NBRC 15573 / CFN 42).